Reading from the N-terminus, the 578-residue chain is Lysine--tRNA ligase (578 aa).

Residues glutamate 414 and glutamate 421 each contribute to the Mg(2+) site.

This sequence belongs to the class-II aminoacyl-tRNA synthetase family. In terms of assembly, homodimer. Requires Mg(2+) as cofactor.

It is found in the cytoplasm. It carries out the reaction tRNA(Lys) + L-lysine + ATP = L-lysyl-tRNA(Lys) + AMP + diphosphate. The sequence is that of Lysine--tRNA ligase from Porphyromonas gingivalis (strain ATCC 33277 / DSM 20709 / CIP 103683 / JCM 12257 / NCTC 11834 / 2561).